The sequence spans 324 residues: Glyoxylate/hydroxypyruvate reductase B (324 aa).

Active-site residues include R237 and E266. Catalysis depends on H285, which acts as the Proton donor.

This sequence belongs to the D-isomer specific 2-hydroxyacid dehydrogenase family. GhrB subfamily. In terms of assembly, homodimer.

It localises to the cytoplasm. The catalysed reaction is glycolate + NADP(+) = glyoxylate + NADPH + H(+). It catalyses the reaction (R)-glycerate + NAD(+) = 3-hydroxypyruvate + NADH + H(+). It carries out the reaction (R)-glycerate + NADP(+) = 3-hydroxypyruvate + NADPH + H(+). Functionally, catalyzes the NADPH-dependent reduction of glyoxylate and hydroxypyruvate into glycolate and glycerate, respectively. In Cronobacter sakazakii (strain ATCC BAA-894) (Enterobacter sakazakii), this protein is Glyoxylate/hydroxypyruvate reductase B.